Here is a 127-residue protein sequence, read N- to C-terminus: MYPNLTGLGIHEPKQIERYSLRQEAHKDILKIYFRKQKGELFAKSVKFKYPRQVKSVLVSGGNNQYKEVTEINRNLTLVIDELNKITKPTPTAEVDLKQKILTDLRHLEKVVSSKIAEIEVDLEKLK.

It belongs to the UPF0325 family.

This Vibrio atlanticus (strain LGP32) (Vibrio splendidus (strain Mel32)) protein is UPF0325 protein VS_2356.